The chain runs to 542 residues: Cryptochrome-1 (542 aa).

In terms of domain architecture, Photolyase/cryptochrome alpha/beta spans 5-140 (GANVIWFRHG…DFVEKVSHTL (136 aa)). FAD-binding positions include arginine 237, serine 265, serine 267, glutamine 311, histidine 378, 410-412 (DAD), cysteine 416, and asparagine 419.

Belongs to the DNA photolyase class-1 family. As to quaternary structure, interacts with tim and per; promoted by light conditions. Interaction with tim irreversibly commits tim to proteasomal degradation. Interacts with l(1)G0136/CG8198. The cofactor is FAD. As to expression, expressed at higher levels in the head than in body and it is more expressed in antennae than in legs, wings and mouth appendages. Prominent expression is seen in cells of the lateral brain, which are close to or coincident with the clock neurons. Abundance oscillates in a circadian manner.

It localises to the cytoplasm. It is found in the perinuclear region. The protein localises to the nucleus. In terms of biological role, blue light-dependent regulator that is the input of the circadian feedback loop. Has no photolyase activity for cyclobutane pyrimidine dimers or 6-4 photoproducts. Regulation of expression by light suggests a role in photoreception for locomotor activity rhythms. Functions, together with per, as a transcriptional repressor required for the oscillation of peripheral circadian clocks and for the correct specification of clock cells. Genes directly activated by the transcription factors Clock (Clk) and cycle (cyc) are repressed by cry. Necessary for light-dependent magnetosensitivity, an intact circadian system is not required for the magnetoreception mechanism to operate. Required for both the naive and trained responses to magnetic field, consistent with the notion that cry is in the input pathway of magnetic sensing. In Drosophila melanogaster (Fruit fly), this protein is Cryptochrome-1.